The chain runs to 407 residues: Divalent metal cation transporter MntH (407 aa).

A run of 11 helical transmembrane segments spans residues 16-36, 43-63, 95-115, 119-139, 152-172, 193-213, 239-259, 288-308, 318-338, 346-366, and 387-407; these read LTLL…GNFA, STFG…AMLV, WVQA…GAAV, LLLG…TWGI, FVVG…LVFS, AVYL…IYLH, IAMT…AAAF, LFGL…TLAG, FTIP…VVIA, ILVL…IPLL, and VGRL…VAMI.

It belongs to the NRAMP family.

The protein resides in the cell inner membrane. Its function is as follows. H(+)-stimulated, divalent metal cation uptake system. The polypeptide is Divalent metal cation transporter MntH (Aeromonas hydrophila subsp. hydrophila (strain ATCC 7966 / DSM 30187 / BCRC 13018 / CCUG 14551 / JCM 1027 / KCTC 2358 / NCIMB 9240 / NCTC 8049)).